Consider the following 331-residue polypeptide: UPF0194 membrane protein YbhG (331 aa).

Positions 1 to 19 (MKKPVVIGLVIAAIVAVIA) are cleaved as a signal peptide. A coiled-coil region spans residues 140 to 209 (RTISANDLEN…DLQDTTLIAP (70 aa)).

The protein belongs to the UPF0194 family.

Its subcellular location is the periplasm. This Salmonella typhi protein is UPF0194 membrane protein YbhG (ybhG).